We begin with the raw amino-acid sequence, 337 residues long: tRNA N6-adenosine threonylcarbamoyltransferase (337 aa).

Positions 111 and 115 each coordinate Fe cation. Residues 134 to 138 (LVSGG), D167, G180, and N272 each bind substrate. D300 contributes to the Fe cation binding site.

It belongs to the KAE1 / TsaD family. The cofactor is Fe(2+).

Its subcellular location is the cytoplasm. It catalyses the reaction L-threonylcarbamoyladenylate + adenosine(37) in tRNA = N(6)-L-threonylcarbamoyladenosine(37) in tRNA + AMP + H(+). In terms of biological role, required for the formation of a threonylcarbamoyl group on adenosine at position 37 (t(6)A37) in tRNAs that read codons beginning with adenine. Is involved in the transfer of the threonylcarbamoyl moiety of threonylcarbamoyl-AMP (TC-AMP) to the N6 group of A37, together with TsaE and TsaB. TsaD likely plays a direct catalytic role in this reaction. The sequence is that of tRNA N6-adenosine threonylcarbamoyltransferase from Salmonella choleraesuis (strain SC-B67).